Reading from the N-terminus, the 241-residue chain is tRNA (guanine-N(7)-)-methyltransferase (241 aa).

S-adenosyl-L-methionine-binding residues include E71, E96, D123, and D146. D146 is an active-site residue. Substrate-binding positions include K150, D182, and 219-222 (TKFE).

This sequence belongs to the class I-like SAM-binding methyltransferase superfamily. TrmB family.

The enzyme catalyses guanosine(46) in tRNA + S-adenosyl-L-methionine = N(7)-methylguanosine(46) in tRNA + S-adenosyl-L-homocysteine. The protein operates within tRNA modification; N(7)-methylguanine-tRNA biosynthesis. Functionally, catalyzes the formation of N(7)-methylguanine at position 46 (m7G46) in tRNA. This Pseudoalteromonas translucida (strain TAC 125) protein is tRNA (guanine-N(7)-)-methyltransferase.